Here is a 407-residue protein sequence, read N- to C-terminus: DAZ-associated protein 1 (407 aa).

N-acetylmethionine is present on Met1. 2 RRM domains span residues 10–97 and 113–190; these read GKLF…RTRP and NKIF…RAEP. A disordered region spans residues 74-117; sequence TLDGRNIDPKPCTPRGMQPERTRPKEGWQKGPRSDNSKSNKIFV. The segment covering 91–111 has biased composition (basic and acidic residues); it reads QPERTRPKEGWQKGPRSDNSK. Lys150 carries the N6-acetyllysine modification. Basic and acidic residues predominate over residues 185–194; the sequence is VKRAEPRDSK. The tract at residues 185–407 is disordered; that stretch reads VKRAEPRDSK…NVQGFHPYRR (223 aa). Positions 195 to 207 are enriched in polar residues; that stretch reads SQAPGQPGASQWG. Positions 247–262 are enriched in pro residues; it reads GPPPAGRGAPPPPPPF. Arg253 bears the Omega-N-methylarginine mark. The segment covering 280 to 294 has biased composition (low complexity); it reads FPQGYGAPPQFSFGY. Pro residues predominate over residues 295–315; that stretch reads GPPPPPPDQFAPPGVPPPPAT. Residues 364-379 are compositionally biased toward low complexity; the sequence is SDPSQQPPSYGGPSVP. Residues 380 to 393 are compositionally biased toward gly residues; sequence GSGGPPAGGSGFGR.

As to quaternary structure, interacts with DAZ and DAZL. Post-translationally, acetylation at Lys-150 is predominantly observed in the nuclear fraction, and may regulate nucleocytoplasmic transport. As to expression, mainly expressed in testis. Expressed to a lower level in thymus. Weakly or not expressed in heart, liver, brain, placenta, lung, skeletal muscle, kidney and pancreas.

The protein localises to the cytoplasm. The protein resides in the nucleus. In terms of biological role, RNA-binding protein, which may be required during spermatogenesis. The sequence is that of DAZ-associated protein 1 (DAZAP1) from Homo sapiens (Human).